Reading from the N-terminus, the 82-residue chain is Exodeoxyribonuclease 7 small subunit (82 aa).

This sequence belongs to the XseB family. As to quaternary structure, heterooligomer composed of large and small subunits.

The protein localises to the cytoplasm. It catalyses the reaction Exonucleolytic cleavage in either 5'- to 3'- or 3'- to 5'-direction to yield nucleoside 5'-phosphates.. In terms of biological role, bidirectionally degrades single-stranded DNA into large acid-insoluble oligonucleotides, which are then degraded further into small acid-soluble oligonucleotides. This chain is Exodeoxyribonuclease 7 small subunit, found in Mycobacterium marinum (strain ATCC BAA-535 / M).